The primary structure comprises 274 residues: NH(3)-dependent NAD(+) synthetase (274 aa).

Residue 46–53 participates in ATP binding; that stretch reads GISGGQDS. Aspartate 52 is a binding site for Mg(2+). Arginine 140 contacts deamido-NAD(+). Threonine 160 contacts ATP. Position 165 (glutamate 165) interacts with Mg(2+). Deamido-NAD(+) is bound by residues lysine 173 and aspartate 180. ATP-binding residues include lysine 189 and threonine 211. 260-261 provides a ligand contact to deamido-NAD(+); sequence HK.

Belongs to the NAD synthetase family. Homodimer.

The enzyme catalyses deamido-NAD(+) + NH4(+) + ATP = AMP + diphosphate + NAD(+) + H(+). Its pathway is cofactor biosynthesis; NAD(+) biosynthesis; NAD(+) from deamido-NAD(+) (ammonia route): step 1/1. Catalyzes the ATP-dependent amidation of deamido-NAD to form NAD. Uses ammonia as a nitrogen source. This Listeria welshimeri serovar 6b (strain ATCC 35897 / DSM 20650 / CCUG 15529 / CIP 8149 / NCTC 11857 / SLCC 5334 / V8) protein is NH(3)-dependent NAD(+) synthetase.